The following is a 288-amino-acid chain: 33 kDa chaperonin (288 aa).

2 disulfide bridges follow: Cys-233–Cys-235 and Cys-267–Cys-270.

Belongs to the HSP33 family. In terms of processing, under oxidizing conditions two disulfide bonds are formed involving the reactive cysteines. Under reducing conditions zinc is bound to the reactive cysteines and the protein is inactive.

It is found in the cytoplasm. Its function is as follows. Redox regulated molecular chaperone. Protects both thermally unfolding and oxidatively damaged proteins from irreversible aggregation. Plays an important role in the bacterial defense system toward oxidative stress. The protein is 33 kDa chaperonin of Actinobacillus succinogenes (strain ATCC 55618 / DSM 22257 / CCUG 43843 / 130Z).